A 227-amino-acid chain; its full sequence is Protein FAM3C (227 aa).

A signal peptide spans 1 to 24 (MRVAGAAKLVVAVAVFLLTFYVIS). Disulfide bonds link cysteine 58–cysteine 86 and cysteine 64–cysteine 221. A GG-type lectin domain is found at 67–225 (KHFAFKMASG…VEMEGCIPQK (159 aa)).

The protein belongs to the FAM3 family.

It is found in the secreted. It localises to the cytoplasmic vesicle. Functionally, may be involved in retinal laminar formation. Promotes epithelial to mesenchymal transition. In Bos taurus (Bovine), this protein is Protein FAM3C (FAM3C).